The sequence spans 2692 residues: Thyroglobulin (2692 aa).

The N-terminal stretch at 1-19 is a signal peptide; it reads MALALWVFALLGSACLVSA. Iodotyrosine; alternate is present on Y24. Position 24 is a sulfotyrosine; alternate (Y24). Y24 carries the thyroxine; alternate modification. Triiodothyronine; alternate is present on Y24. 3 Thyroglobulin type-1 domains span residues 31–92, 93–160, and 161–248; these read LRPC…PVAC, LSFC…PARC, and PGSC…LAGT. 8 disulfides stabilise this stretch: C34–C52, C63–C70, C72–C92, C96–C120, C131–C138, C140–C160, C164–C183, and C194–C235. Y108 carries the post-translational modification Iodotyrosine. The N-linked (GlcNAc...) asparagine glycan is linked to N110. An Iodotyrosine; alternate modification is found at Y149. Y149 bears the Diiodotyrosine; alternate mark. An N-linked (GlcNAc...) asparagine glycan is attached at N198. 2 positions are modified to iodotyrosine: Y234 and Y258. The Thyroglobulin type-1 4 domain maps to 298 to 358; the sequence is PTKCEVERFA…TRRPSEPLSC (61 aa). Intrachain disulfides connect C301-C319, C330-C336, C338-C358, C364-C621, C408-C609, C632-C637, C639-C659, C663-C688, and C699-C704. N-linked (GlcNAc...) asparagine glycosylation is found at N485, N497, and N546. Thyroglobulin type-1 domains follow at residues 606 to 659, 660 to 727, and 728 to 923; these read SQGC…RPRC, PTAC…PKQC, and PTPC…VPAC. An Iodotyrosine; alternate modification is found at Y705. A Thyroxine; alternate modification is found at Y705. The residue at position 705 (Y705) is a Triiodothyronine; alternate. Y705 is subject to Diiodotyrosine; alternate. Cystine bridges form between C706/C727, C731/C764, C775/C900, C902/C923, C927/C1033, C1044/C1051, C1053/C1079, C1128/C1147, C1151/C1171, C1183/C1190, C1192/C1212, C1237/C1287, and C1262/C1278. N-linked (GlcNAc...) asparagine glycosylation occurs at N749. Y786 carries the post-translational modification Iodotyrosine. N-linked (GlcNAc...) asparagine glycosylation is present at N855. Y868 is modified (iodotyrosine; alternate). A Diiodotyrosine; alternate modification is found at Y868. The residue at position 885 (Y885) is a Diiodotyrosine. The N-linked (GlcNAc...) asparagine glycan is linked to N949. The residue at position 994 (Y994) is an Iodotyrosine; alternate. At Y994 the chain carries Diiodotyrosine; alternate. 3 Thyroglobulin type-1 domains span residues 1021–1079, 1088–1147, and 1148–1212; these read SGPL…PTPC, LSAW…SAPC, and PGLC…QPAC. The N-linked (GlcNAc...) asparagine glycan is linked to N1142. Y1241 carries the iodotyrosine modification. Y1241 carries the thyroxine modification. 2 N-linked (GlcNAc...) asparagine glycosylation sites follow: N1296 and N1384. 13 disulfide bridges follow: C1372–C1392, C1395–C1406, C1409–C1423, C1426–C1443, C1447–C1456, C1476–C1498, C1535–C1559, C1539–C1545, C1571–C1594, C1656–C1681, C1660–C1666, C1665–C1766, and C1692–C1709. Type II repeat units lie at residues 1389-1402, 1403-1419, and 1420-1436; these read PLGCVRCPEGSYFQ, EEQCIPCPAGFYQEQTG, and SLACAPCPAGTTTTSVG. An Iodotyrosine; alternate modification is found at Y1400. Y1400 is modified (diiodotyrosine; alternate). The region spanning 1444–1498 is the Thyroglobulin type-1 11 domain; it reads VTACQRDEAGLQCDQDGQYRASQRDRASGKAFCVDSEGRRLPWSETQAPLVDAQC. Residues 1535–1655 form a Type IIIA repeat; that stretch reads CLADCARDEA…GASLTEAHLF (121 aa). One copy of the Type IIIB repeat lies at 1656–1823; the sequence is CLLACDRDSC…LFSLQQAHLW (168 aa). N-linked (GlcNAc...) asparagine glycosylation is present at N1800. Intrachain disulfides connect C1824–C1850, C1828–C1835, C1859–C1870, C1927–C1955, C1931–C1937, C1936–C2007, C1966–C1979, C2061–C2085, C2065–C2071, and C2094–C2103. Residues 1824–1926 form a Type IIIA repeat; it reads CLSRCVQEPS…DKAISSGFFE (103 aa). A Type IIIB repeat occupies 1927–2060; sequence CERLCDVDPC…VGDFSAARER (134 aa). N1944 carries an N-linked (GlcNAc...) asparagine glycan. A Type IIIA repeat occupies 2061 to 2118; it reads CLLECSRHQACLVTTLQTRPGAVRCMFYADTQSCTHSLQAQNCQLLLREEATHIYRKP. Position 2115 is an iodotyrosine (Y2115). The interval 2119 to 2692 is cholinesterase-like (ChEL); that stretch reads DIPLPGLGSS…PELASKSYSK (574 aa). N-linked (GlcNAc...) asparagine glycosylation is found at N2181 and N2226. Y2467 carries the post-translational modification Thyroxine. At Y2500 the chain carries Iodotyrosine; alternate. The residue at position 2500 (Y2500) is a Thyroxine; alternate. Y2500 carries the post-translational modification Triiodothyronine; alternate. Y2500 bears the Diiodotyrosine; alternate mark. Iodotyrosine is present on residues Y2514 and Y2544. A disulfide bridge links C2518 with C2642. A Diiodotyrosine modification is found at Y2624. Positions 2658–2671 are enriched in acidic residues; the sequence is EAEDGPLAESEEED. The interval 2658-2692 is disordered; it reads EAEDGPLAESEEEDRPGLTEDLLGLPELASKSYSK. The residue at position 2690 (Y2690) is an Iodotyrosine; alternate. The residue at position 2690 (Y2690) is a Thyroxine; alternate. Y2690 bears the Triiodothyronine; alternate mark. Y2690 carries the post-translational modification Diiodotyrosine; alternate.

This sequence belongs to the type-B carboxylesterase/lipase family. In terms of assembly, monomer. Homodimer (via ChEL region); occurs in the endoplasmic reticulum and is required for export to the Golgi apparatus. Homooligomer; disulfide-linked; stored in this form in the thyroid follicle lumen. Iodinated on tyrosine residues by TPO. There are 4 pairs of iodinated tyrosines used for coupling: acceptor Tyr-24 is coupled to donor Tyr-149 or Tyr-234, acceptor Tyr-2500 is coupled to donor Tyr-2467, acceptor Tyr-2690 in monomer 1 is coupled to donor Tyr-2690 in monomer 2 and acceptor Tyr-1241 in monomer 1 is coupled to donor Tyr-108 in monomer 2. Post-translationally, sulfated tyrosines are desulfated during iodination. In terms of processing, undergoes sequential proteolysis by cathepsins to release thyroxine (T4) and triiodothyronine (T3) hormones. In the thyroid follicle lumen, cross-linked TG (storage form) is solubilized by limited proteolysis mediated by cathepsins CTSB and/or CTSL. Partially cleaved TG is further processed by CTSK/cathepsin K and/or CTSL resulting in the release of T4. Following endocytosis, further processing occurs leading to the release of T3 and more T4 hormones. Expressed in thyroid epithelial cells.

It localises to the secreted. Its function is as follows. Acts as a substrate for the production of iodinated thyroid hormones thyroxine (T4) and triiodothyronine (T3). The synthesis of T3 and T4 involves iodination of selected tyrosine residues of TG/thyroglobulin followed by their oxidative coupling. Following TG re-internalization and lysosomal-mediated proteolysis, T3 and T4 are released from the polypeptide backbone leading to their secretion into the bloodstream. One dimer produces 7 thyroid hormone molecules. This Sus scrofa (Pig) protein is Thyroglobulin.